A 496-amino-acid chain; its full sequence is MPNQHMEELNDQQIVRREKMAALAEQGIDPFGKRFERTATSGQLKEKYADKTKEELHEINETATIAGRLMTKRGKGKVGFAHIQDRDGQIQIYVRKDAVGEENYEIFKKADLGDFLGVEGEVMRTDMGELSIKATHITHLSKALRPLPEKFHGLSDIETIYRKRYLDLISNRESFDRFVTRSKIISEIRRYLDAQGFLEVETPVLHNEAGGAAAKPFITHHNAQNIDMVLRIALELHLKRLIVGGMERVYEIGRIFRNEGMDATHNPEFTMIEVYQAYADFHDIMDLTEGIIQHAAKAVKGDGPVNYQGTEIKINEPFKRIHMVDAIKEITGVDFWQDMTFEEAVALANEKHVPVEKHYTEVGQIINAFFEEFVEETLTQPTFVYGHPVAVSPLAKKNPEDPRFTDRFELFIMTKEYGNAYSELNDPIDQLSRFEAQAAAKELGDDEATGIDYDYVEALEYGMPPTGGLGIGIDRLCMLLTDTTTIRDVLLFPTMK.

The Mg(2+) site is built by glutamate 409 and glutamate 416.

The protein belongs to the class-II aminoacyl-tRNA synthetase family. Homodimer. Requires Mg(2+) as cofactor.

The protein resides in the cytoplasm. It catalyses the reaction tRNA(Lys) + L-lysine + ATP = L-lysyl-tRNA(Lys) + AMP + diphosphate. This Streptococcus thermophilus (strain ATCC BAA-491 / LMD-9) protein is Lysine--tRNA ligase.